The chain runs to 270 residues: A-type potassium channel modulatory protein KCNIP2 (270 aa).

The segment covering 1-17 has biased composition (basic and acidic residues); sequence MRGQGRKESLSESRDLD. Residues 1 to 34 form a disordered region; it reads MRGQGRKESLSESRDLDGSYDQLTGHPPGPSKKA. Ser-9 is subject to Phosphoserine. 2 S-palmitoyl cysteine lipidation sites follow: Cys-45 and Cys-46. Residues 81 to 137 enclose the EF-hand 1; degenerate domain; it reads FELSTVCHRPEGLEQLQEQTKFTRRELQVLYRGFKNECPSGIVNEENFKQIYSQFFP. EF-hand domains lie at 140–175, 176–211, and 224–259; these read DSSN…ILRG, TIDD…IYDM, and APRE…DENI. Ca(2+)-binding residues include Asp-153, Asn-155, Asp-157, Ser-159, Asp-164, Asp-189, Asn-191, Asp-193, Cys-195, Glu-200, Asp-237, Asn-239, Asp-241, and Glu-248. Residues 257 to 270 are interaction with KCND2; that stretch reads ENIMRSMQLFDNVI.

It belongs to the recoverin family. As to quaternary structure, component of heteromultimeric potassium channels. Identified in potassium channel complexes containing KCND1, KCND2, KCND3, KCNIP1, KCNIP2, KCNIP3, KCNIP4, DPP6 and DPP10. The KCND2-KCNIP2 channel complex contains four KCND2 and four KCNIP2 subunits. Interacts with KCND2. Probably part of a complex consisting of KCNIP1, KCNIP2 isoform 3 and KCND2. At least isoform 2 and isoform 3 can self-associate to form homodimers and homotetramers. Isoform 3 interacts with KCNIP1 in a calcium-dependent manner. Interacts with KCND3; each KCNIP2 monomer interacts with two adjacent KCND3 subunits, through both the N-terminal inactivation ball of a KCND3 subunit and a C-terminal helix from the adjacent KCND3 subunit, clamping them together; this interaction modulates the channel gating kinetics. Post-translationally, palmitoylated. Palmitoylation enhances association with the plasma membrane. In terms of tissue distribution, expressed in heart, brain and lung. In brain, abundantly expressed in striatum, hippocampus and olfactory bulb, moderately expressed in cerebral cortex and lowly expressed in thalamus and hypothalamus. Isoform 1 is predominant in cerebral cortex, striatum and hippocampus. Isoform 1, isoform 2 and isoform 3 are equally expressed in olfactory bulb. Iisoform 3 is expressed at high levels and isoform 1 at low levels in heart (in PubMed:11263977).

It localises to the cell membrane. Its function is as follows. Regulatory subunit of Kv4/D (Shal)-type voltage-gated rapidly inactivating A-type potassium channels. Modulates channel density, inactivation kinetics and rate of recovery from inactivation in a calcium-dependent and isoform-specific manner. Involved in KCND2 and KCND3 trafficking to the cell surface. Essential for the expression of I(To) currents in the heart. Required for normal protein levels of KCND2 in the heart ventricle. This Rattus norvegicus (Rat) protein is A-type potassium channel modulatory protein KCNIP2.